The following is a 142-amino-acid chain: Large ribosomal subunit protein uL13 (142 aa).

The protein belongs to the universal ribosomal protein uL13 family. As to quaternary structure, part of the 50S ribosomal subunit.

This protein is one of the early assembly proteins of the 50S ribosomal subunit, although it is not seen to bind rRNA by itself. It is important during the early stages of 50S assembly. This is Large ribosomal subunit protein uL13 from Syntrophobacter fumaroxidans (strain DSM 10017 / MPOB).